The following is a 95-amino-acid chain: MTKSELIEKLATRQSQLSAKEVESAIKEMLEQMATTLEGGDRIEIRGFGSFSLHYRAPRTGRNPKTGTSVELDGKYVPHFKPGKELRERVDAVNV.

Positions 56–76 (RAPRTGRNPKTGTSVELDGKY) are disordered.

It belongs to the bacterial histone-like protein family. Heterodimer of an alpha and a beta chain.

Functionally, this protein is one of the two subunits of integration host factor, a specific DNA-binding protein that functions in genetic recombination as well as in transcriptional and translational control. The sequence is that of Integration host factor subunit beta from Shewanella denitrificans (strain OS217 / ATCC BAA-1090 / DSM 15013).